A 198-amino-acid polypeptide reads, in one-letter code: Transcriptional regulator GfcR (198 aa).

This sequence belongs to the purine/pyrimidine phosphoribosyltransferase family. GfcR subfamily.

The protein is Transcriptional regulator GfcR of Thermoplasma acidophilum (strain ATCC 25905 / DSM 1728 / JCM 9062 / NBRC 15155 / AMRC-C165).